A 160-amino-acid polypeptide reads, in one-letter code: Nucleotide-binding protein VC_1508 (160 aa).

The protein belongs to the YajQ family.

Nucleotide-binding protein. In Vibrio cholerae serotype O1 (strain ATCC 39315 / El Tor Inaba N16961), this protein is Nucleotide-binding protein VC_1508.